The chain runs to 391 residues: Ferrochelatase (391 aa).

His196 and Glu281 together coordinate Fe cation.

It belongs to the ferrochelatase family.

It localises to the cytoplasm. It catalyses the reaction heme b + 2 H(+) = protoporphyrin IX + Fe(2+). Its pathway is porphyrin-containing compound metabolism; protoheme biosynthesis; protoheme from protoporphyrin-IX: step 1/1. In terms of biological role, catalyzes the ferrous insertion into protoporphyrin IX. This Prochlorococcus marinus (strain MIT 9312) protein is Ferrochelatase.